The following is a 214-amino-acid chain: MSDERREGLAPEIEATGLVPMVVEQSARGERAYDIYSRLLKERVIFLVGPVEDHMANLIVAQLLFLESENPDKDIHIYINSPGGAVTAGLAIYDTMQFIKPDVSTVCIGQAASMGALLLTGGTKGKRYALPNSRMMIHQPLGGFQGQATDVDIHAREILDMRDRLNRIMAHHTGQDMETIARDTDRDNFMSPDTACEYGLVDAVLADRKALDQA.

The active-site Nucleophile is the Ser-113. Residue His-138 is part of the active site.

This sequence belongs to the peptidase S14 family. In terms of assembly, fourteen ClpP subunits assemble into 2 heptameric rings which stack back to back to give a disk-like structure with a central cavity, resembling the structure of eukaryotic proteasomes.

It is found in the cytoplasm. The enzyme catalyses Hydrolysis of proteins to small peptides in the presence of ATP and magnesium. alpha-casein is the usual test substrate. In the absence of ATP, only oligopeptides shorter than five residues are hydrolyzed (such as succinyl-Leu-Tyr-|-NHMec, and Leu-Tyr-Leu-|-Tyr-Trp, in which cleavage of the -Tyr-|-Leu- and -Tyr-|-Trp bonds also occurs).. In terms of biological role, cleaves peptides in various proteins in a process that requires ATP hydrolysis. Has a chymotrypsin-like activity. Plays a major role in the degradation of misfolded proteins. This Alkalilimnicola ehrlichii (strain ATCC BAA-1101 / DSM 17681 / MLHE-1) protein is ATP-dependent Clp protease proteolytic subunit.